Here is a 648-residue protein sequence, read N- to C-terminus: Protein kinase YegI (648 aa).

The Protein kinase domain maps to 15-302 (TTLGRELGKG…KAWVAALDSL (288 aa)). Residues 21–29 (LGKGGEGAV) and K41 each bind ATP. D143 functions as the Proton acceptor in the catalytic mechanism.

In terms of processing, autophosphorylated. Dephosphorylated by PphC.

Its function is as follows. Probable serine/threonine kinase. This is Protein kinase YegI (yegI) from Escherichia coli (strain K12).